A 334-amino-acid chain; its full sequence is Holliday junction branch migration complex subunit RuvB (334 aa).

Residues 4–184 (ADRLIQPQIQ…FGIPLRLEFY (181 aa)) form a large ATPase domain (RuvB-L) region. Residues Arg-24, Gly-65, Lys-68, Thr-69, Thr-70, 131–133 (EDY), Arg-174, Tyr-184, and Arg-221 contribute to the ATP site. Thr-69 serves as a coordination point for Mg(2+). The segment at 185 to 255 (NIKDLSTIVT…VAEHALDLLD (71 aa)) is small ATPAse domain (RuvB-S). The head domain (RuvB-H) stretch occupies residues 258–334 (SEGFDYMDRK…YQHFELIKPE (77 aa)). DNA contacts are provided by Arg-294, Arg-313, and Arg-318.

It belongs to the RuvB family. In terms of assembly, homohexamer. Forms an RuvA(8)-RuvB(12)-Holliday junction (HJ) complex. HJ DNA is sandwiched between 2 RuvA tetramers; dsDNA enters through RuvA and exits via RuvB. An RuvB hexamer assembles on each DNA strand where it exits the tetramer. Each RuvB hexamer is contacted by two RuvA subunits (via domain III) on 2 adjacent RuvB subunits; this complex drives branch migration. In the full resolvosome a probable DNA-RuvA(4)-RuvB(12)-RuvC(2) complex forms which resolves the HJ.

Its subcellular location is the cytoplasm. It catalyses the reaction ATP + H2O = ADP + phosphate + H(+). Its function is as follows. The RuvA-RuvB-RuvC complex processes Holliday junction (HJ) DNA during genetic recombination and DNA repair, while the RuvA-RuvB complex plays an important role in the rescue of blocked DNA replication forks via replication fork reversal (RFR). RuvA specifically binds to HJ cruciform DNA, conferring on it an open structure. The RuvB hexamer acts as an ATP-dependent pump, pulling dsDNA into and through the RuvAB complex. RuvB forms 2 homohexamers on either side of HJ DNA bound by 1 or 2 RuvA tetramers; 4 subunits per hexamer contact DNA at a time. Coordinated motions by a converter formed by DNA-disengaged RuvB subunits stimulates ATP hydrolysis and nucleotide exchange. Immobilization of the converter enables RuvB to convert the ATP-contained energy into a lever motion, pulling 2 nucleotides of DNA out of the RuvA tetramer per ATP hydrolyzed, thus driving DNA branch migration. The RuvB motors rotate together with the DNA substrate, which together with the progressing nucleotide cycle form the mechanistic basis for DNA recombination by continuous HJ branch migration. Branch migration allows RuvC to scan DNA until it finds its consensus sequence, where it cleaves and resolves cruciform DNA. This is Holliday junction branch migration complex subunit RuvB from Shewanella baltica (strain OS155 / ATCC BAA-1091).